Reading from the N-terminus, the 124-residue chain is Class I hydrophobin 1 (124 aa).

The N-terminal stretch at Met-1 to Ala-18 is a signal peptide. Intrachain disulfides connect Cys-35-Cys-85, Cys-43-Cys-79, Cys-44-Cys-63, and Cys-86-Cys-97.

The protein belongs to the fungal hydrophobin family.

It is found in the secreted. Its subcellular location is the cell wall. Aerial growth, conidiation, and dispersal of filamentous fungi in the environment rely upon a capability of their secreting small amphipathic proteins called hydrophobins (HPBs) with low sequence identity. Class I can self-assemble into an outermost layer of rodlet bundles on aerial cell surfaces, conferring cellular hydrophobicity that supports fungal growth, development and dispersal; whereas Class II form highly ordered films at water-air interfaces through intermolecular interactions but contribute nothing to the rodlet structure. In Botryotinia fuckeliana, hydrophobins are not involved in conferring surface hydrophobicity to conidia and aerial hyphae and their function in sclerotia and fruiting bodies remains to be investigated. The chain is Class I hydrophobin 1 (Bhp1) from Botryotinia fuckeliana (strain B05.10) (Noble rot fungus).